The sequence spans 165 residues: PARP-type zinc finger-containing protein C13F5.07c (165 aa).

The segment at 8–100 (YRIEIAPNNR…KVVDAINEGH (93 aa)) adopts a PARP-type; degenerate zinc-finger fold. Residues 100–114 (HVSESDERESRKLGE) show a composition bias toward basic and acidic residues. The tract at residues 100 to 165 (HVSESDERES…TDGSEAYEDD (66 aa)) is disordered. The span at 117–128 (NVNSQKLKTSSP) shows a compositional bias: polar residues. Residues 131–141 (VVRKNKRHHTT) are compositionally biased toward basic residues. Residues 149–165 (SDLDAEFTDGSEAYEDD) show a composition bias toward acidic residues.

It is found in the cytoplasm. Its subcellular location is the nucleus. The protein is PARP-type zinc finger-containing protein C13F5.07c of Schizosaccharomyces pombe (strain 972 / ATCC 24843) (Fission yeast).